A 293-amino-acid polypeptide reads, in one-letter code: Elongation factor Ts (293 aa).

The interval 81-84 (TDFV) is involved in Mg(2+) ion dislocation from EF-Tu.

Belongs to the EF-Ts family.

It is found in the cytoplasm. In terms of biological role, associates with the EF-Tu.GDP complex and induces the exchange of GDP to GTP. It remains bound to the aminoacyl-tRNA.EF-Tu.GTP complex up to the GTP hydrolysis stage on the ribosome. The chain is Elongation factor Ts from Teredinibacter turnerae (strain ATCC 39867 / T7901).